A 212-amino-acid chain; its full sequence is Thiamine-phosphate synthase (212 aa).

38–42 (QLREK) contacts 4-amino-2-methyl-5-(diphosphooxymethyl)pyrimidine. Residues aspartate 71 and aspartate 90 each contribute to the Mg(2+) site. Lysine 138 serves as a coordination point for 4-amino-2-methyl-5-(diphosphooxymethyl)pyrimidine. Glycine 166 contributes to the 2-[(2R,5Z)-2-carboxy-4-methylthiazol-5(2H)-ylidene]ethyl phosphate binding site.

It belongs to the thiamine-phosphate synthase family. Mg(2+) is required as a cofactor.

It carries out the reaction 2-[(2R,5Z)-2-carboxy-4-methylthiazol-5(2H)-ylidene]ethyl phosphate + 4-amino-2-methyl-5-(diphosphooxymethyl)pyrimidine + 2 H(+) = thiamine phosphate + CO2 + diphosphate. The catalysed reaction is 2-(2-carboxy-4-methylthiazol-5-yl)ethyl phosphate + 4-amino-2-methyl-5-(diphosphooxymethyl)pyrimidine + 2 H(+) = thiamine phosphate + CO2 + diphosphate. It catalyses the reaction 4-methyl-5-(2-phosphooxyethyl)-thiazole + 4-amino-2-methyl-5-(diphosphooxymethyl)pyrimidine + H(+) = thiamine phosphate + diphosphate. It functions in the pathway cofactor biosynthesis; thiamine diphosphate biosynthesis; thiamine phosphate from 4-amino-2-methyl-5-diphosphomethylpyrimidine and 4-methyl-5-(2-phosphoethyl)-thiazole: step 1/1. Functionally, condenses 4-methyl-5-(beta-hydroxyethyl)thiazole monophosphate (THZ-P) and 2-methyl-4-amino-5-hydroxymethyl pyrimidine pyrophosphate (HMP-PP) to form thiamine monophosphate (TMP). The sequence is that of Thiamine-phosphate synthase from Chlamydia abortus (strain DSM 27085 / S26/3) (Chlamydophila abortus).